Consider the following 181-residue polypeptide: GMP synthase [glutamine-hydrolyzing] subunit A (181 aa).

One can recognise a Glutamine amidotransferase type-1 domain in the interval 2-181 (KILVVNNYGQ…FDNFLEICRR (180 aa)). Residue C72 is the Nucleophile of the active site. Catalysis depends on residues H159 and E161.

Heterodimer composed of a glutamine amidotransferase subunit (A) and a GMP-binding subunit (B).

The enzyme catalyses XMP + L-glutamine + ATP + H2O = GMP + L-glutamate + AMP + diphosphate + 2 H(+). Its pathway is purine metabolism; GMP biosynthesis; GMP from XMP (L-Gln route): step 1/1. Its function is as follows. Catalyzes the synthesis of GMP from XMP. This is GMP synthase [glutamine-hydrolyzing] subunit A from Methanothrix thermoacetophila (strain DSM 6194 / JCM 14653 / NBRC 101360 / PT) (Methanosaeta thermophila).